The primary structure comprises 289 residues: Four and a half LIM domains protein 3 (289 aa).

Serine 2 carries the N-acetylserine modification. A C4-type zinc finger spans residues cysteine 7 to cysteine 31. 2 LIM zinc-binding domains span residues cysteine 40–cysteine 92 and cysteine 101–cysteine 153. Lysine 157 is subject to N6-acetyllysine. LIM zinc-binding domains are found at residues cysteine 162–cysteine 212 and cysteine 221–aspartate 275. At lysine 244 the chain carries N6-acetyllysine.

As to quaternary structure, interacts with SOX15; the interaction recruits FHL3 to FOXK1 promoters where it acts as a transcriptional coactivator of FOXK1. As to expression, expressed in myogenic progenitor cells (at protein level). Expressed in skeletal striated muscle and the heart. Expressed to a lesser extent, in lung, and kidney. Expressed in skin and skeletal muscles such as the masseter, tongue, tibialis anterior and plantar muscles.

The protein resides in the nucleus. The protein localises to the cytoplasm. Its function is as follows. Recruited by SOX15 to FOXK1 promoters where it acts as a transcriptional coactivator of FOXK1. This Mus musculus (Mouse) protein is Four and a half LIM domains protein 3 (Fhl3).